The sequence spans 254 residues: Trans-aconitate 2-methyltransferase (254 aa).

This sequence belongs to the methyltransferase superfamily. Tam family.

It is found in the cytoplasm. The catalysed reaction is trans-aconitate + S-adenosyl-L-methionine = (E)-3-(methoxycarbonyl)pent-2-enedioate + S-adenosyl-L-homocysteine. Catalyzes the S-adenosylmethionine monomethyl esterification of trans-aconitate. The polypeptide is Trans-aconitate 2-methyltransferase (Mycobacterium sp. (strain JLS)).